Reading from the N-terminus, the 200-residue chain is Probable molybdenum cofactor guanylyltransferase (200 aa).

Residues 9-11, Lys-21, Asp-69, and Asp-100 each bind GTP; that span reads LAG. Asp-100 is a Mg(2+) binding site.

This sequence belongs to the MobA family. Mg(2+) serves as cofactor.

It localises to the cytoplasm. It carries out the reaction Mo-molybdopterin + GTP + H(+) = Mo-molybdopterin guanine dinucleotide + diphosphate. Its function is as follows. Transfers a GMP moiety from GTP to Mo-molybdopterin (Mo-MPT) cofactor (Moco or molybdenum cofactor) to form Mo-molybdopterin guanine dinucleotide (Mo-MGD) cofactor. The chain is Probable molybdenum cofactor guanylyltransferase from Bacillus cereus (strain Q1).